The chain runs to 365 residues: tRNA (guanine(6)-N2)-methyltransferase (365 aa).

The THUMP domain occupies 69–182 (NENSRLLHRV…KDVFFLGIDT (114 aa)). S-adenosyl-L-methionine-binding positions include 198–202 (HPAHL), 228–230 (SGT), Glu248, 276–277 (DA), and Asn293.

This sequence belongs to the methyltransferase superfamily. In terms of assembly, monomer in solution.

It is found in the cytoplasm. The catalysed reaction is guanosine(6) in tRNA + S-adenosyl-L-methionine = N(2)-methylguanosine(6) in tRNA + S-adenosyl-L-homocysteine + H(+). S-adenosyl-L-methionine-dependent methyltransferase that catalyzes the methylation of the guanosine nucleotide at position 6 (m2G6) in tRNA(Phe). This chain is tRNA (guanine(6)-N2)-methyltransferase, found in Pyrococcus furiosus (strain ATCC 43587 / DSM 3638 / JCM 8422 / Vc1).